The primary structure comprises 647 residues: Replication protein E1 (647 aa).

The short motif at 86 to 88 (KRK) is the Nuclear localization signal element. 2 disordered regions span residues 88–107 (KFTS…HGSP) and 146–178 (QVDG…SIED). Residues Ser-92 and Ser-106 each carry the phosphoserine; by host modification. Over residues 149–169 (GQNGDWQSNSSQSSGVGASNS) the composition is skewed to low complexity. A DNA-binding region region spans residues 182–348 (NSNRTLKSIQ…QTVLQHSFDN (167 aa)). Positions 447 to 597 (IEFTAFLDAF…FPFDENGNPI (151 aa)) constitute an SF3 helicase domain. ATP is bound at residue 473-480 (GPANTGKS). Lys-554 participates in a covalent cross-link: Glycyl lysine isopeptide (Lys-Gly) (interchain with G-Cter in SUMO).

The protein belongs to the papillomaviridae E1 protein family. As to quaternary structure, can form hexamers. Interacts with E2 protein; this interaction increases E1 DNA binding specificity. Interacts with host DNA polymerase subunit POLA2. Interacts with host single stranded DNA-binding protein RPA1. Interacts with host TOP1; this interaction stimulates the enzymatic activity of TOP1. Post-translationally, phosphorylated. Sumoylated.

Its subcellular location is the host nucleus. The enzyme catalyses Couples ATP hydrolysis with the unwinding of duplex DNA by translocating in the 3'-5' direction.. It catalyses the reaction ATP + H2O = ADP + phosphate + H(+). In terms of biological role, ATP-dependent DNA 3'-5' helicase required for initiation of viral DNA replication. It forms a complex with the viral E2 protein. The E1-E2 complex binds to the replication origin which contains binding sites for both proteins. During the initial step, a dimer of E1 interacts with a dimer of protein E2 leading to a complex that binds the viral origin of replication with high specificity. Then, a second dimer of E1 displaces the E2 dimer in an ATP-dependent manner to form the E1 tetramer. Following this, two E1 monomers are added to each half of the site, which results in the formation of two E1 trimers on the viral ori. Subsequently, two hexamers will be created. The double hexamer acts as a bi-directional helicase machinery and unwinds the viral DNA and then recruits the host DNA polymerase to start replication. The chain is Replication protein E1 from Homo sapiens (Human).